We begin with the raw amino-acid sequence, 384 residues long: GTPase Obg (384 aa).

An Obg domain is found at 1 to 159 (MKFIDEAKIE…RSLQLELKVL (159 aa)). The segment at 20 to 46 (ATSFRREKFVPRGGPDGGDGGKGGSVW) is disordered. A compositionally biased stretch (gly residues) spans 33 to 43 (GPDGGDGGKGG). The 189-residue stretch at 160-348 (ADVGLLGMPN…LVHQINQYLT (189 aa)) folds into the OBG-type G domain. GTP is bound by residues 166-173 (GMPNAGKS), 191-195 (FTTLH), 213-216 (DIPG), 284-287 (NKLD), and 329-331 (SAL). Residues serine 173 and threonine 193 each coordinate Mg(2+).

It belongs to the TRAFAC class OBG-HflX-like GTPase superfamily. OBG GTPase family. As to quaternary structure, monomer. Mg(2+) is required as a cofactor.

It is found in the cytoplasm. In terms of biological role, an essential GTPase which binds GTP, GDP and possibly (p)ppGpp with moderate affinity, with high nucleotide exchange rates and a fairly low GTP hydrolysis rate. Plays a role in control of the cell cycle, stress response, ribosome biogenesis and in those bacteria that undergo differentiation, in morphogenesis control. This chain is GTPase Obg, found in Neisseria meningitidis serogroup C (strain 053442).